We begin with the raw amino-acid sequence, 866 residues long: Paramyosin (866 aa).

The interval Met1–Pro22 is nonhelical region. Residues Ser23 to Val839 adopt a coiled-coil conformation. Residues Gly840–Met866 are nonhelical region.

Belongs to the paramyosin family. As to quaternary structure, homodimer.

The protein localises to the cytoplasm. It is found in the myofibril. Its function is as follows. Paramyosin is a major structural component of many thick filaments isolated from invertebrate muscles. This chain is Paramyosin, found in Schistosoma japonicum (Blood fluke).